A 429-amino-acid chain; its full sequence is 4-hydroxyphenylacetate degradation bifunctional isomerase/decarboxylase (429 aa).

2 Approximate repeats span residues 1-215 and 216-429; these read MKGT…RKSF and PTLP…ETAK. Residues Glu-276, Glu-278, and Asp-307 each coordinate a divalent metal cation.

Belongs to the FAH family. In terms of assembly, monomer. Mg(2+) serves as cofactor.

The catalysed reaction is (2E,4Z)-5-hydroxypenta-2,4-diene-1,2,5-tricarboxylate = (3E,5R)-5-carboxy-2-oxohept-3-enedioate. It catalyses the reaction (3E,5R)-5-carboxy-2-oxohept-3-enedioate + H(+) = (4Z)-2-oxohept-4-enedioate + CO2. Its pathway is aromatic compound metabolism; 4-hydroxyphenylacetate degradation; pyruvate and succinate semialdehyde from 4-hydroxyphenylacetate: step 4/7. It participates in aromatic compound metabolism; 4-hydroxyphenylacetate degradation; pyruvate and succinate semialdehyde from 4-hydroxyphenylacetate: step 5/7. Functionally, decarboxylates OPET (5-oxo-pent-3-ene-1,2,5-tricarboxylic acid) into HHDD (2-hydroxy-hept-2,4-diene-1,7-dioate) and isomerizes it to OHED (2-oxo-hept-3-ene-1,7-dioate). In Escherichia coli, this protein is 4-hydroxyphenylacetate degradation bifunctional isomerase/decarboxylase (hpaG).